A 347-amino-acid chain; its full sequence is Dihydroorotase (347 aa).

Positions 17 and 19 each coordinate Zn(2+). Residues H19–R21 and N45 each bind substrate. Zn(2+) contacts are provided by K102, H139, and H177. K102 is subject to N6-carboxylysine. H139 contacts substrate. L222 is a binding site for substrate. Zn(2+) is bound at residue D250. D250 is a catalytic residue. Residues H254 and A266 each coordinate substrate.

The protein belongs to the metallo-dependent hydrolases superfamily. DHOase family. Class II DHOase subfamily. Homodimer. Zn(2+) serves as cofactor.

The catalysed reaction is (S)-dihydroorotate + H2O = N-carbamoyl-L-aspartate + H(+). The protein operates within pyrimidine metabolism; UMP biosynthesis via de novo pathway; (S)-dihydroorotate from bicarbonate: step 3/3. In terms of biological role, catalyzes the reversible cyclization of carbamoyl aspartate to dihydroorotate. The protein is Dihydroorotase of Acidovorax sp. (strain JS42).